We begin with the raw amino-acid sequence, 469 residues long: Neuraminidase (469 aa).

At 1–9 (MNPNQKIIT) the chain is on the intravirion side. A helical membrane pass occupies residues 10–30 (IGSVSLIIATICFLMQIAILV). An involved in apical transport and lipid raft association region spans residues 11–33 (GSVSLIIATICFLMQIAILVTTV). The Virion surface segment spans residues 31–469 (TTVTLHFKQY…DGADINLMPI (439 aa)). The tract at residues 36–88 (HFKQYECDSPANNQVMPCEPIIIERNITEIVYLTNTTIEKEICPKLVEYRNWS) is hypervariable stalk region. 3 N-linked (GlcNAc...) asparagine; by host glycosylation sites follow: asparagine 61, asparagine 70, and asparagine 86. Positions 91-469 (QCKITGFAPF…DGADINLMPI (379 aa)) are head of neuraminidase. Intrachain disulfides connect cysteine 92–cysteine 417, cysteine 124–cysteine 129, cysteine 183–cysteine 230, cysteine 232–cysteine 237, cysteine 278–cysteine 291, cysteine 280–cysteine 289, cysteine 318–cysteine 337, and cysteine 421–cysteine 447. Arginine 118 lines the substrate pocket. N-linked (GlcNAc...) asparagine; by host glycosylation is present at asparagine 146. Aspartate 151 functions as the Proton donor/acceptor in the catalytic mechanism. Residue arginine 152 coordinates substrate. N-linked (GlcNAc...) asparagine; by host glycosylation is found at asparagine 200 and asparagine 234. 276 to 277 (EE) is a substrate binding site. Arginine 292 contributes to the substrate binding site. Residues aspartate 293, glycine 297, and aspartate 324 each contribute to the Ca(2+) site. A substrate-binding site is contributed by arginine 371. Residue asparagine 402 is glycosylated (N-linked (GlcNAc...) asparagine; by host). Residue tyrosine 406 is the Nucleophile of the active site.

The protein belongs to the glycosyl hydrolase 34 family. In terms of assembly, homotetramer. The cofactor is Ca(2+). In terms of processing, N-glycosylated.

It is found in the virion membrane. Its subcellular location is the host apical cell membrane. It catalyses the reaction Hydrolysis of alpha-(2-&gt;3)-, alpha-(2-&gt;6)-, alpha-(2-&gt;8)- glycosidic linkages of terminal sialic acid residues in oligosaccharides, glycoproteins, glycolipids, colominic acid and synthetic substrates.. Its activity is regulated as follows. Inhibited by the neuraminidase inhibitors zanamivir (Relenza) and oseltamivir (Tamiflu). These drugs interfere with the release of progeny virus from infected cells and are effective against all influenza strains. Resistance to neuraminidase inhibitors is quite rare. In terms of biological role, catalyzes the removal of terminal sialic acid residues from viral and cellular glycoconjugates. Cleaves off the terminal sialic acids on the glycosylated HA during virus budding to facilitate virus release. Additionally helps virus spread through the circulation by further removing sialic acids from the cell surface. These cleavages prevent self-aggregation and ensure the efficient spread of the progeny virus from cell to cell. Otherwise, infection would be limited to one round of replication. Described as a receptor-destroying enzyme because it cleaves a terminal sialic acid from the cellular receptors. May facilitate viral invasion of the upper airways by cleaving the sialic acid moieties on the mucin of the airway epithelial cells. Likely to plays a role in the budding process through its association with lipid rafts during intracellular transport. May additionally display a raft-association independent effect on budding. Plays a role in the determination of host range restriction on replication and virulence. Sialidase activity in late endosome/lysosome traffic seems to enhance virus replication. The polypeptide is Neuraminidase (Aves (whales)).